We begin with the raw amino-acid sequence, 259 residues long: 1,2-dihydroxy-1,2-dihydronaphthalene dehydrogenase (259 aa).

Residue 8–32 (SITGAGSGIGLELVRSFKSAGYYVS) coordinates NAD(+). Position 140 (Ser140) interacts with substrate. The active-site Proton acceptor is Tyr153.

It belongs to the short-chain dehydrogenases/reductases (SDR) family.

It catalyses the reaction (1R,2S)-1,2-dihydronaphthalene-1,2-diol + NAD(+) = naphthalene-1,2-diol + NADH + H(+). The catalysed reaction is cis-1,2-dihydroxy-1,2-dihydrodibenzothiophene + NAD(+) = 1,2-dihydroxydibenzothiophene + NADH + H(+). The protein operates within aromatic compound metabolism; naphthalene degradation. In terms of biological role, catalyzes the oxidation of naphthalene dihydrodiol into 1,2-dihydroxynaphthalene. The sequence is that of 1,2-dihydroxy-1,2-dihydronaphthalene dehydrogenase (doxE) from Pseudomonas sp. (strain C18).